Reading from the N-terminus, the 263-residue chain is 5'-nucleotidase SurE (263 aa).

A divalent metal cation-binding residues include aspartate 8, aspartate 9, serine 40, and asparagine 98.

This sequence belongs to the SurE nucleotidase family. The cofactor is a divalent metal cation.

It is found in the cytoplasm. The catalysed reaction is a ribonucleoside 5'-phosphate + H2O = a ribonucleoside + phosphate. In terms of biological role, nucleotidase that shows phosphatase activity on nucleoside 5'-monophosphates. The polypeptide is 5'-nucleotidase SurE (Gloeobacter violaceus (strain ATCC 29082 / PCC 7421)).